The following is a 180-amino-acid chain: Nascent polypeptide-associated complex subunit alpha (180 aa).

Residues 16–80 form the NAC-A/B domain; it reads SKNEKKAREL…AKVDDMNKRI (65 aa). The interval 81–113 is disordered; that stretch reads AEAQQQQAQQDALSKAAGETGEAGEEDKSQDAI. Low complexity predominate over residues 82 to 100; it reads EAQQQQAQQDALSKAAGET. Residues 142 to 179 enclose the UBA domain; sequence LDAKDIDIIVEQTQVSRAKAVKALRVHDGDMVNAIMEL.

Belongs to the NAC-alpha family. In terms of assembly, part of the nascent polypeptide-associated complex (NAC), consisting of EGD2 and EGD1. NAC associates with ribosomes via EGD1.

The protein localises to the cytoplasm. It is found in the nucleus. Component of the nascent polypeptide-associated complex (NAC), a dynamic component of the ribosomal exit tunnel, protecting the emerging polypeptides from interaction with other cytoplasmic proteins to ensure appropriate nascent protein targeting. The NAC complex also promotes mitochondrial protein import by enhancing productive ribosome interactions with the outer mitochondrial membrane and blocks the inappropriate interaction of ribosomes translating non-secretory nascent polypeptides with translocation sites in the membrane of the endoplasmic reticulum. EGD2 may also be involved in transcription regulation. This Debaryomyces hansenii (strain ATCC 36239 / CBS 767 / BCRC 21394 / JCM 1990 / NBRC 0083 / IGC 2968) (Yeast) protein is Nascent polypeptide-associated complex subunit alpha (EGD2).